Here is a 905-residue protein sequence, read N- to C-terminus: Core protein VP3 (905 aa).

Belongs to the orbivirus VP3 family.

It is found in the virion. Functionally, the VP3 protein is one of the five proteins (with VP1, VP4, VP6 and VP7) which form the inner capsid of the virus. This chain is Core protein VP3 (Segment-3), found in African horse sickness virus 6 (AHSV-6).